The primary structure comprises 238 residues: Probable transcriptional regulatory protein ABC1956 (238 aa).

It belongs to the TACO1 family. YeeN subfamily.

It is found in the cytoplasm. This is Probable transcriptional regulatory protein ABC1956 from Shouchella clausii (strain KSM-K16) (Alkalihalobacillus clausii).